The sequence spans 211 residues: Methylthioribulose-1-phosphate dehydratase (211 aa).

Zn(2+)-binding residues include histidine 97 and histidine 99.

It belongs to the aldolase class II family. MtnB subfamily. In terms of assembly, homotetramer. It depends on Zn(2+) as a cofactor.

The catalysed reaction is 5-(methylsulfanyl)-D-ribulose 1-phosphate = 5-methylsulfanyl-2,3-dioxopentyl phosphate + H2O. The protein operates within amino-acid biosynthesis; L-methionine biosynthesis via salvage pathway; L-methionine from S-methyl-5-thio-alpha-D-ribose 1-phosphate: step 2/6. In terms of biological role, catalyzes the dehydration of methylthioribulose-1-phosphate (MTRu-1-P) into 2,3-diketo-5-methylthiopentyl-1-phosphate (DK-MTP-1-P). The protein is Methylthioribulose-1-phosphate dehydratase of Geobacillus thermodenitrificans (strain NG80-2).